The chain runs to 61 residues: Large ribosomal subunit protein uL29 (61 aa).

It belongs to the universal ribosomal protein uL29 family.

The polypeptide is Large ribosomal subunit protein uL29 (Campylobacter curvus (strain 525.92)).